Reading from the N-terminus, the 62-residue chain is Large ribosomal subunit protein bL33 (62 aa).

It belongs to the bacterial ribosomal protein bL33 family.

This chain is Large ribosomal subunit protein bL33, found in Cyanothece sp. (strain PCC 7425 / ATCC 29141).